A 937-amino-acid polypeptide reads, in one-letter code: Isoleucine--tRNA ligase (937 aa).

The 'HIGH' region motif lies at Pro-58–Thr-68. Glu-566 is a binding site for L-isoleucyl-5'-AMP. Positions Lys-607–Ser-611 match the 'KMSKS' region motif. Lys-610 is an ATP binding site. Residues Cys-906, Cys-909, Cys-925, and Cys-928 each contribute to the Zn(2+) site.

The protein belongs to the class-I aminoacyl-tRNA synthetase family. IleS type 1 subfamily. Monomer. Zn(2+) serves as cofactor.

It is found in the cytoplasm. It catalyses the reaction tRNA(Ile) + L-isoleucine + ATP = L-isoleucyl-tRNA(Ile) + AMP + diphosphate. In terms of biological role, catalyzes the attachment of isoleucine to tRNA(Ile). As IleRS can inadvertently accommodate and process structurally similar amino acids such as valine, to avoid such errors it has two additional distinct tRNA(Ile)-dependent editing activities. One activity is designated as 'pretransfer' editing and involves the hydrolysis of activated Val-AMP. The other activity is designated 'posttransfer' editing and involves deacylation of mischarged Val-tRNA(Ile). This is Isoleucine--tRNA ligase from Lawsonia intracellularis (strain PHE/MN1-00).